A 396-amino-acid polypeptide reads, in one-letter code: Probable 20S rRNA accumulation protein 4 (396 aa).

It belongs to the TSR4 family.

The protein localises to the cytoplasm. The protein resides in the nucleus. It is found in the nucleolus. Functionally, required for processing of the 20S pre-rRNA at site D to generate mature 18S rRNA. In Schizosaccharomyces pombe (strain 972 / ATCC 24843) (Fission yeast), this protein is Probable 20S rRNA accumulation protein 4.